Consider the following 321-residue polypeptide: tRNA pseudouridine synthase B (321 aa).

D47 functions as the Nucleophile in the catalytic mechanism.

Belongs to the pseudouridine synthase TruB family. Type 1 subfamily.

It catalyses the reaction uridine(55) in tRNA = pseudouridine(55) in tRNA. Its function is as follows. Responsible for synthesis of pseudouridine from uracil-55 in the psi GC loop of transfer RNAs. This Shewanella baltica (strain OS223) protein is tRNA pseudouridine synthase B.